A 383-amino-acid polypeptide reads, in one-letter code: Protein arginine N-methyltransferase PRMT10 (383 aa).

A disordered region spans residues 1-23 (MRSSQNGGAMGGRAAGTGGGGPS). A compositionally biased stretch (gly residues) spans 8–22 (GAMGGRAAGTGGGGP). The region spanning 29–360 (EVDYAQYFCT…KENHRLMEIE (332 aa)) is the SAM-dependent MTase PRMT-type domain. Residues Gln45, Arg54, Gly78, Glu100, and Glu129 each contribute to the S-adenosyl-L-methionine site. Residues Glu143 and Glu152 contribute to the active site. Positions 190 to 230 (DRKRNDFDGAMADWHNFSDEIKSYYGVDMGVLTKPFAEEQE) are dimerization arm.

Belongs to the class I-like SAM-binding methyltransferase superfamily. Protein arginine N-methyltransferase family. Ring-like homodimer.

The enzyme catalyses L-arginyl-[protein] + 2 S-adenosyl-L-methionine = N(omega),N(omega)-dimethyl-L-arginyl-[protein] + 2 S-adenosyl-L-homocysteine + 2 H(+). Functionally, methylates (mono and asymmetric dimethylation) the guanidino nitrogens of arginyl residues in some proteins. Essential for regulating flowering time. This is Protein arginine N-methyltransferase PRMT10 (PRMT10) from Arabidopsis thaliana (Mouse-ear cress).